Here is a 386-residue protein sequence, read N- to C-terminus: MAGKRQSQDPVNAIKVVASTMLNSFLEDLKEKNVLNKQELQTMGQTVNVITKKTENLVGDLTEKTQVVGKIFKDHFLNSGSLLSLKSHAENEDECSESSSAVLQEIQASQVKVRKLCPCDHSHEPKITNVHEIYPVMEKEGRTRLALIICNSEFDYLSKRQGSEIDILGMQDLLENLGYSVVVKENLSALEMKTELKNFAARQEHKFSDSTFLVFMSHGTLDGICGTKHRNEEPDILHDDTIFQIFNNRNCRSLKDKPKVIIMQACRGRGDGAVWVTDVGEASAWTCDQPLQCYIFNDAIEKTHVEKDFIAFKSSTPHNVSWRLNTDGSLFISHLIHYFREFSCCHHLEEIFRKVQNSFETPNTMIQMPTIERVSMTRYFYLFPGN.

The 91-residue stretch at 1–91 (MAGKRQSQDP…LLSLKSHAEN (91 aa)) folds into the CARD domain. A Phosphoserine modification is found at S84. Catalysis depends on residues H218 and C266.

Belongs to the peptidase C14A family. In terms of assembly, heterotetramer that consists of two anti-parallel arranged heterodimers, each one formed by two subunits (Potential). May interact with TRAF2.

Involved in the activation cascade of caspases responsible for apoptosis execution. This Canis lupus familiaris (Dog) protein is Caspase-12.